A 245-amino-acid polypeptide reads, in one-letter code: 1-(5-phosphoribosyl)-5-[(5-phosphoribosylamino)methylideneamino] imidazole-4-carboxamide isomerase (245 aa).

The active-site Proton acceptor is Asp-8. The active-site Proton donor is the Asp-129.

Belongs to the HisA/HisF family.

It is found in the cytoplasm. The catalysed reaction is 1-(5-phospho-beta-D-ribosyl)-5-[(5-phospho-beta-D-ribosylamino)methylideneamino]imidazole-4-carboxamide = 5-[(5-phospho-1-deoxy-D-ribulos-1-ylimino)methylamino]-1-(5-phospho-beta-D-ribosyl)imidazole-4-carboxamide. The protein operates within amino-acid biosynthesis; L-histidine biosynthesis; L-histidine from 5-phospho-alpha-D-ribose 1-diphosphate: step 4/9. The protein is 1-(5-phosphoribosyl)-5-[(5-phosphoribosylamino)methylideneamino] imidazole-4-carboxamide isomerase of Trichlorobacter lovleyi (strain ATCC BAA-1151 / DSM 17278 / SZ) (Geobacter lovleyi).